Reading from the N-terminus, the 91-residue chain is MNISKPQQRTLHALAQGARIELLRDDHGRIVAAYCITGEGWRLSDCSLAVFKALKKRRFIASSGGGPYRITRDGAVNLRAQVDNRVTARGG.

Belongs to the UPF0386 family.

This is UPF0386 protein Caul_4643 from Caulobacter sp. (strain K31).